The sequence spans 288 residues: Sulfhydrogenase 2 subunit gamma (288 aa).

Residues 4-103 (YRSYDARIIE…RGPYGNGFPM (100 aa)) enclose the FAD-binding FR-type domain. Residues C250, C255, C258, and C270 each coordinate [2Fe-2S] cluster.

As to quaternary structure, dimer of heterotetramer of alpha, beta, gamma and delta subunits. The nickel-containing alpha and delta subunits constitute the hydrogenase activity. The beta and gamma subunits (flavin-containing dimer) constitute the sulfur reductase activity. It depends on FAD as a cofactor. Requires [2Fe-2S] cluster as cofactor.

The protein localises to the cytoplasm. The enzyme catalyses n sulfur + H2 = (n-1) sulfur + hydrogen sulfide + H(+). Part of a bifunctional enzyme complex that functions as a hydrogen-evolving hydrogenase with sulfur-reducing activity. May play a role in hydrogen cycling during fermentative growth. Activity exhibited with NAD in addition to NADPH. The beta and gamma subunits form the sulfur-reducing component that catalyzes the cytoplasmic production of hydrogen sulfide in the presence of elemental sulfur. This chain is Sulfhydrogenase 2 subunit gamma, found in Pyrococcus furiosus (strain ATCC 43587 / DSM 3638 / JCM 8422 / Vc1).